A 130-amino-acid polypeptide reads, in one-letter code: Small ribosomal subunit protein uS11 (130 aa).

This sequence belongs to the universal ribosomal protein uS11 family. Part of the 30S ribosomal subunit. Interacts with proteins S7 and S18. Binds to IF-3.

Located on the platform of the 30S subunit, it bridges several disparate RNA helices of the 16S rRNA. Forms part of the Shine-Dalgarno cleft in the 70S ribosome. This Shewanella sediminis (strain HAW-EB3) protein is Small ribosomal subunit protein uS11.